Reading from the N-terminus, the 406-residue chain is Glutamyl-tRNA reductase (406 aa).

Substrate contacts are provided by residues 50–53 (TCNR), Ser-107, 112–114 (EPQ), and Gln-118. The active-site Nucleophile is Cys-51. 187–192 (GAGEMG) serves as a coordination point for NADP(+).

Belongs to the glutamyl-tRNA reductase family. Homodimer.

The catalysed reaction is (S)-4-amino-5-oxopentanoate + tRNA(Glu) + NADP(+) = L-glutamyl-tRNA(Glu) + NADPH + H(+). The protein operates within porphyrin-containing compound metabolism; protoporphyrin-IX biosynthesis; 5-aminolevulinate from L-glutamyl-tRNA(Glu): step 1/2. Functionally, catalyzes the NADPH-dependent reduction of glutamyl-tRNA(Glu) to glutamate 1-semialdehyde (GSA). This Aquifex aeolicus (strain VF5) protein is Glutamyl-tRNA reductase.